We begin with the raw amino-acid sequence, 100 residues long: MLAIENYLILSAILFSIGTIGVLTRRNAIVIFMCIEMMLNAVNLTFIAFSRHLGNIDGQVFVFFVMTVAAAEAAVGLALMIAFFKNRESIDVEDVNLMKL.

3 helical membrane passes run 2–22 (LAIENYLILSAILFSIGTIGV), 29–49 (IVIFMCIEMMLNAVNLTFIAF), and 61–81 (FVFFVMTVAAAEAAVGLALMI).

Belongs to the complex I subunit 4L family. As to quaternary structure, NDH-1 is composed of 14 different subunits. Subunits NuoA, H, J, K, L, M, N constitute the membrane sector of the complex.

It is found in the cell inner membrane. It carries out the reaction a quinone + NADH + 5 H(+)(in) = a quinol + NAD(+) + 4 H(+)(out). Its function is as follows. NDH-1 shuttles electrons from NADH, via FMN and iron-sulfur (Fe-S) centers, to quinones in the respiratory chain. The immediate electron acceptor for the enzyme in this species is believed to be ubiquinone. Couples the redox reaction to proton translocation (for every two electrons transferred, four hydrogen ions are translocated across the cytoplasmic membrane), and thus conserves the redox energy in a proton gradient. In Citrifermentans bemidjiense (strain ATCC BAA-1014 / DSM 16622 / JCM 12645 / Bem) (Geobacter bemidjiensis), this protein is NADH-quinone oxidoreductase subunit K 2.